The chain runs to 291 residues: N-acetylmannosamine kinase (291 aa).

ATP contacts are provided by residues 5-12 and 132-139; these read AIDIGGTK and GVGGGVVS. 4 residues coordinate Zn(2+): His-156, Cys-166, Cys-168, and Cys-173.

Belongs to the ROK (NagC/XylR) family. NanK subfamily. As to quaternary structure, homodimer.

The catalysed reaction is an N-acyl-D-mannosamine + ATP = an N-acyl-D-mannosamine 6-phosphate + ADP + H(+). The protein operates within amino-sugar metabolism; N-acetylneuraminate degradation; D-fructose 6-phosphate from N-acetylneuraminate: step 2/5. Catalyzes the phosphorylation of N-acetylmannosamine (ManNAc) to ManNAc-6-P. This chain is N-acetylmannosamine kinase, found in Escherichia coli O6:K15:H31 (strain 536 / UPEC).